The following is a 303-amino-acid chain: Elongation factor Ts (303 aa).

Positions 81 to 84 are involved in Mg(2+) ion dislocation from EF-Tu; it reads TDFV.

This sequence belongs to the EF-Ts family.

Its subcellular location is the cytoplasm. Associates with the EF-Tu.GDP complex and induces the exchange of GDP to GTP. It remains bound to the aminoacyl-tRNA.EF-Tu.GTP complex up to the GTP hydrolysis stage on the ribosome. The protein is Elongation factor Ts of Mesomycoplasma hyopneumoniae (strain J / ATCC 25934 / NCTC 10110) (Mycoplasma hyopneumoniae).